Reading from the N-terminus, the 541-residue chain is Chaperonin GroEL 2 (541 aa).

ATP is bound by residues 29 to 32 (TLGP), 86 to 90 (DGTTT), Gly-414, 478 to 480 (DAA), and Asp-494.

Belongs to the chaperonin (HSP60) family. In terms of assembly, forms a cylinder of 14 subunits composed of two heptameric rings stacked back-to-back. Interacts with the co-chaperonin GroES.

It localises to the cytoplasm. It carries out the reaction ATP + H2O + a folded polypeptide = ADP + phosphate + an unfolded polypeptide.. Functionally, together with its co-chaperonin GroES, plays an essential role in assisting protein folding. The GroEL-GroES system forms a nano-cage that allows encapsulation of the non-native substrate proteins and provides a physical environment optimized to promote and accelerate protein folding. The chain is Chaperonin GroEL 2 from Frankia casuarinae (strain DSM 45818 / CECT 9043 / HFP020203 / CcI3).